Consider the following 187-residue polypeptide: UPF0301 protein VSAL_I0547 (187 aa).

It belongs to the UPF0301 (AlgH) family.

The chain is UPF0301 protein VSAL_I0547 from Aliivibrio salmonicida (strain LFI1238) (Vibrio salmonicida (strain LFI1238)).